Consider the following 186-residue polypeptide: Mitoferrin-2A (186 aa).

The stretch at 75 to 163 is one Solcar repeat; sequence SNVTTHMLAG…FACYEKLKKT (89 aa). The next 3 membrane-spanning stretches (helical) occupy residues 77–96, 137–157, and 172–185; these read VTTH…CLMY, RGLN…FACY, and GNSH…YSCP.

This sequence belongs to the mitochondrial carrier (TC 2.A.29) family.

Its subcellular location is the mitochondrion inner membrane. It catalyses the reaction Fe(2+)(in) = Fe(2+)(out). Its function is as follows. Mitochondrial iron transporter that mediates iron uptake. Probably required for heme synthesis of hemoproteins and Fe-S cluster assembly in non-erythroid cells. This Xenopus laevis (African clawed frog) protein is Mitoferrin-2A (slc25a28-a).